A 447-amino-acid chain; its full sequence is UDP-N-acetylglucosamine 1-carboxyvinyltransferase (447 aa).

Residue 27–28 (KN) coordinates phosphoenolpyruvate. Arginine 97 serves as a coordination point for UDP-N-acetyl-alpha-D-glucosamine. Cysteine 121 (proton donor) is an active-site residue. 2-(S-cysteinyl)pyruvic acid O-phosphothioketal is present on cysteine 121. Residues 126-130 (RPVDL), aspartate 314, and valine 336 each bind UDP-N-acetyl-alpha-D-glucosamine.

Belongs to the EPSP synthase family. MurA subfamily.

The protein localises to the cytoplasm. The enzyme catalyses phosphoenolpyruvate + UDP-N-acetyl-alpha-D-glucosamine = UDP-N-acetyl-3-O-(1-carboxyvinyl)-alpha-D-glucosamine + phosphate. It participates in cell wall biogenesis; peptidoglycan biosynthesis. Its function is as follows. Cell wall formation. Adds enolpyruvyl to UDP-N-acetylglucosamine. This is UDP-N-acetylglucosamine 1-carboxyvinyltransferase from Trichormus variabilis (strain ATCC 29413 / PCC 7937) (Anabaena variabilis).